The primary structure comprises 247 residues: ATP synthase subunit a, chloroplastic (247 aa).

The next 5 membrane-spanning stretches (helical) occupy residues 38–58 (QVLI…TLAV), 95–115 (VPFI…GALL), 134–154 (INTT…AGLS), 199–219 (LVVV…VMFL), and 220–240 (GLFT…AYIG).

This sequence belongs to the ATPase A chain family. F-type ATPases have 2 components, CF(1) - the catalytic core - and CF(0) - the membrane proton channel. CF(1) has five subunits: alpha(3), beta(3), gamma(1), delta(1), epsilon(1). CF(0) has four main subunits: a, b, b' and c.

Its subcellular location is the plastid. It localises to the chloroplast thylakoid membrane. Key component of the proton channel; it plays a direct role in the translocation of protons across the membrane. The sequence is that of ATP synthase subunit a, chloroplastic from Lactuca sativa (Garden lettuce).